Consider the following 112-residue polypeptide: Protein Churchill (112 aa).

Zn(2+) contacts are provided by Cys-2, Cys-5, Cys-30, Cys-33, His-59, Cys-61, Cys-64, His-66, His-71, Cys-88, and Cys-91.

It belongs to the Churchill family.

Transcriptional activator that mediates FGF signaling during neural development. Plays a role in the regulation of cell movement. Its function is as follows. Does not bind DNA by itself. This Homo sapiens (Human) protein is Protein Churchill (CHURC1).